The chain runs to 355 residues: Peptide chain release factor 1 (355 aa).

The residue at position 233 (Q233) is an N5-methylglutamine.

The protein belongs to the prokaryotic/mitochondrial release factor family. Methylated by PrmC. Methylation increases the termination efficiency of RF1.

Its subcellular location is the cytoplasm. Functionally, peptide chain release factor 1 directs the termination of translation in response to the peptide chain termination codons UAG and UAA. The polypeptide is Peptide chain release factor 1 (Syntrophobacter fumaroxidans (strain DSM 10017 / MPOB)).